The sequence spans 413 residues: Replication factor C large subunit (413 aa).

54-61 (GPPGSGKT) contributes to the ATP binding site.

The protein belongs to the activator 1 small subunits family. RfcL subfamily. As to quaternary structure, heteromultimer composed of small subunits (RfcS) and large subunits (RfcL).

Part of the RFC clamp loader complex which loads the PCNA sliding clamp onto DNA. This Thermofilum pendens (strain DSM 2475 / Hrk 5) protein is Replication factor C large subunit.